A 137-amino-acid chain; its full sequence is Small ribosomal subunit protein uS12 (137 aa).

Asp89 is modified (3-methylthioaspartic acid). The interval 101 to 137 (SLDTSGVADRKQSRSKYGAKQPKAGAPAAPVKGKGKK) is disordered. A compositionally biased stretch (low complexity) spans 116–137 (KYGAKQPKAGAPAAPVKGKGKK).

Belongs to the universal ribosomal protein uS12 family. As to quaternary structure, part of the 30S ribosomal subunit. Contacts proteins S8 and S17. May interact with IF1 in the 30S initiation complex.

With S4 and S5 plays an important role in translational accuracy. Its function is as follows. Interacts with and stabilizes bases of the 16S rRNA that are involved in tRNA selection in the A site and with the mRNA backbone. Located at the interface of the 30S and 50S subunits, it traverses the body of the 30S subunit contacting proteins on the other side and probably holding the rRNA structure together. The combined cluster of proteins S8, S12 and S17 appears to hold together the shoulder and platform of the 30S subunit. This Chlorobium chlorochromatii (strain CaD3) protein is Small ribosomal subunit protein uS12.